The chain runs to 91 residues: Potassium channel toxin TdiKIK (91 aa).

Positions 1–25 are cleaved as a signal peptide; it reads MVATNRCCVFALLVALLLIHSLAEA. Positions 26–44 are excised as a propeptide; that stretch reads GKGKEVLGKIKNKLVEVKE. The 34-residue stretch at 58 to 91 folds into the BetaSPN-type CS-alpha/beta domain; the sequence is EYACPVIDKFCEDHCAAKNAIGKCDDFKCQCLNS. 3 cysteine pairs are disulfide-bonded: Cys61-Cys81, Cys68-Cys86, and Cys72-Cys88.

As to expression, expressed by the venom gland.

It is found in the secreted. Its function is as follows. The full peptide presents antibacterial and cytotoxic activities. The synthetic C-terminus (AA 33-76) inhibits voltage-gated potassium channels Kv1.1/KCNA1, Kv1.2/KCNA2, and Kv1.3/KCNA3. The protein is Potassium channel toxin TdiKIK of Tityus discrepans (Venezuelan scorpion).